Consider the following 167-residue polypeptide: NADH-quinone oxidoreductase subunit B 2 (167 aa).

[4Fe-4S] cluster is bound by residues cysteine 38, cysteine 39, cysteine 103, and cysteine 132.

It belongs to the complex I 20 kDa subunit family. As to quaternary structure, NDH-1 is composed of 14 different subunits. Subunits NuoB, C, D, E, F, and G constitute the peripheral sector of the complex. It depends on [4Fe-4S] cluster as a cofactor.

Its subcellular location is the cell inner membrane. The catalysed reaction is a quinone + NADH + 5 H(+)(in) = a quinol + NAD(+) + 4 H(+)(out). Functionally, NDH-1 shuttles electrons from NADH, via FMN and iron-sulfur (Fe-S) centers, to quinones in the respiratory chain. The immediate electron acceptor for the enzyme in this species is believed to be ubiquinone. Couples the redox reaction to proton translocation (for every two electrons transferred, four hydrogen ions are translocated across the cytoplasmic membrane), and thus conserves the redox energy in a proton gradient. The polypeptide is NADH-quinone oxidoreductase subunit B 2 (Rhizobium etli (strain CIAT 652)).